A 1886-amino-acid polypeptide reads, in one-letter code: Polyprotein P3 (1886 aa).

Disordered stretches follow at residues 1-24 (MATR…SGVP), 420-466 (RCDS…MQDD), and 478-529 (RMKK…NQPE). Over residues 9 to 20 (VTQTDGSRTATE) the composition is skewed to polar residues. Positions 488-498 (QQALSSQAQEE) are enriched in low complexity. Residues 879–896 (CKCYICGQEGHYANQCRN) form a CCHC-type zinc finger. Positions 1215–1292 (INAIVDTGAT…GLSPGIQMII (78 aa)) constitute a Peptidase A2 domain. D1220 serves as the catalytic For protease activity. The region spanning 1425–1615 (LLQMKVIRPS…PEIDFLGASL (191 aa)) is the Reverse transcriptase domain. The RNase H type-1 domain maps to 1706-1841 (KDSFIIIETD…ADALSRMINF (136 aa)). Positions 1715, 1758, 1784, and 1833 each coordinate Mg(2+).

In terms of processing, polyprotein P3 is presumably proteolytically cleaved into several chains by viral protease.

It carries out the reaction Endonucleolytic cleavage to 5'-phosphomonoester.. The catalysed reaction is DNA(n) + a 2'-deoxyribonucleoside 5'-triphosphate = DNA(n+1) + diphosphate. Functionally, capsid protein self assembles to form a bacilliform capsid about 90-900 nm in length. The capsid encapsulates the genomic dsDNA. Following virus entry into host cell, provides nuclear import of the viral genome. Virus particles do not enter the nucleus, but are targeted to the nuclear membrane through the interaction with host importins. The protein is Polyprotein P3 of Commelina yellow mottle virus (CoYMV).